A 134-amino-acid chain; its full sequence is Cytochrome b5 isoform E (134 aa).

Residues 5–81 (RKVLSFEEVS…MDKYFIGEID (77 aa)) form the Cytochrome b5 heme-binding domain. Heme contacts are provided by histidine 40 and histidine 64. A helical membrane pass occupies residues 107–127 (FIIKILQFLVPILILGLALVV). Positions 128 to 134 (RHYTKKD) match the AKR2A-binding sequence (ABS) required for endoplasmic reticulum membrane targeting motif.

The protein belongs to the cytochrome b5 family. As to quaternary structure, interacts with CER1, BI-1, FAH1 and FAH2. Interacts with AKR2A. In terms of tissue distribution, expressed in roots, stems, leaves, flowers and siliques.

The protein localises to the cell membrane. It localises to the endoplasmic reticulum membrane. Functionally, membrane bound hemoprotein which function as an electron carrier for several membrane bound oxygenases, including fatty acid desaturases. This chain is Cytochrome b5 isoform E (CYTB5-E), found in Arabidopsis thaliana (Mouse-ear cress).